The primary structure comprises 2871 residues: Fibrillin-1 (2871 aa).

An N-terminal signal peptide occupies residues 1-24 (MRRGGLLEVALGFTVLLASYTSHG). Positions 25 to 44 (ADTNLEAGNVKETRANRAKR) are excised as a propeptide. The tract at residues 45-81 (RGGGGHDALKGPNVCGSRYNAYCCPGWKTLPGGNQCI) is fibrillin unique N-terminal (FUN) domain. An N-terminal domain region spans residues 45–450 (RGGGGHDALK…PPRVLPVNVT (406 aa)). 11 disulfide bridges follow: Cys-59–Cys-68, Cys-67–Cys-80, Cys-85–Cys-94, Cys-89–Cys-100, Cys-102–Cys-111, Cys-119–Cys-129, Cys-123–Cys-134, Cys-136–Cys-145, Cys-150–Cys-160, Cys-154–Cys-166, and Cys-168–Cys-177. EGF-like domains follow at residues 81 to 112 (IVPICRHSCGDGFCSRPNMCTCPSGQIAPSCG), 115 to 146 (SIQHCNIRCMNGGSCSDDHCLCQKGYIGTHCG), and 147 to 178 (QPVCESGCLNGGRCVAPNRCACTYGFTGPQCE). The tract at residues 119–329 (CNIRCMNGGS…YTSPDGTRCI (211 aa)) is interaction with MFAP4. Residues 184–236 (GPCFTVISNQMCQGQLSGIVCTKTLCCATVGRAWGHPCEMCPAQPHPCRRGFI) form the TB 1 domain. Residues 195-221 (CQGQLSGIVCTKTLCCATVGRAWGHPC) are hybrid domain 1. Positions 246–287 (DVDECQAIPGLCQGGNCINTVGSFECKCPAGHKFNEVSQKCE) constitute an EGF-like 4; calcium-binding domain. 6 cysteine pairs are disulfide-bonded: Cys-250–Cys-262, Cys-257–Cys-271, Cys-273–Cys-286, Cys-292–Cys-304, Cys-299–Cys-313, and Cys-315–Cys-328. Residue Ser-268 is glycosylated (O-linked (Glc) serine). One can recognise an EGF-like 5; calcium-binding domain in the interval 288 to 329 (DIDECSTIPGICDGGECTNTVSSYFCKCPPGFYTSPDGTRCI). Positions 334-389 (GYCYTALANGRCSNQLPQSITKMQCCCDVGRCWSPGVTVAPEMCPIRATEDFNKLC) constitute a TB 2 domain. Asn-448 carries an N-linked (GlcNAc...) asparagine glycan. The EGF-like 6 domain occupies 449–489 (VTDYCQLFRYLCQNGRCIPTPGSYRCECNKGFQLDLRGECI). Cystine bridges form between Cys-453-Cys-465, Cys-460-Cys-474, Cys-476-Cys-488, Cys-494-Cys-504, Cys-499-Cys-513, Cys-515-Cys-528, Cys-534-Cys-546, Cys-541-Cys-555, Cys-557-Cys-570, Cys-576-Cys-587, Cys-582-Cys-596, Cys-598-Cys-611, Cys-617-Cys-628, Cys-623-Cys-637, and Cys-639-Cys-652. Residue Ser-471 is glycosylated (O-linked (Glc) serine). An EGF-like 7; calcium-binding domain is found at 490-529 (DVDECEKNPCAGGECINTQGSYTCQCRPGYQSTLTRTECR). An O-linked (Glc) serine glycan is attached at Ser-510. Residues 530–571 (DIDECLQNGRICNNGRCINTDGSFHCVCNAGFHVTRDGKNCE) form the EGF-like 8; calcium-binding domain. Residues 572-612 (DMDECSIRNMCLNGMCINEDGSFKCICKPGFQLASDGRYCK) enclose the EGF-like 9; calcium-binding domain. One can recognise an EGF-like 10; calcium-binding domain in the interval 613 to 653 (DINECETPGICMNGRCVNTDGSYRCECFPGLAVGLDGRVCV). In terms of domain architecture, TB 3 spans 659–711 (STCYGGYKRGQCVKPLFGAVTKSECCCASTEYAFGEPCQPCPSQNSAEYQALC). The 42-residue stretch at 723-764 (DINECALDPDICPNGICENLRGTYKCICNSGYEVDSTGKNCV) folds into the EGF-like 11; calcium-binding domain. 16 cysteine pairs are disulfide-bonded: Cys-727–Cys-739, Cys-734–Cys-748, Cys-750–Cys-763, Cys-769–Cys-781, Cys-776–Cys-790, Cys-792–Cys-805, Cys-811–Cys-821, Cys-816–Cys-830, Cys-832–Cys-845, Cys-853–Cys-875, Cys-862–Cys-887, Cys-876–Cys-890, Cys-896–Cys-908, Cys-914–Cys-926, Cys-921–Cys-935, and Cys-937–Cys-950. The EGF-like 12; calcium-binding domain occupies 765 to 806 (DINECVLNSLLCDNGQCRNTPGSFVCTCPKGFIYKPELKTCE). The EGF-like 13; calcium-binding domain occupies 807-846 (DIDECESSPCINGVCKNSPGSFICECSSESTLDPTKTICI). Residues 851–902 (GTCWQTVIDGRCEININGATLKSQCCSSLGAAWGSPCTPCQVDPICGKGYSR) enclose the TB 4 domain. The hybrid domain 2 stretch occupies residues 862-887 (CEININGATLKSQCCSSLGAAWGSPC). Residues 910–951 (DIDECEVFPGVCKNGLCVNSKGSFKCQCPSGMTLDATGRICL) form the EGF-like 14; calcium-binding domain. The 53-residue stretch at 956-1008 (ETCFLRYEDEECTLPVAGRHRMDACCCSVGAAWGTEECEECPVRNTPEYEELC) folds into the TB 5 domain. An EGF-like 15; calcium-binding domain is found at 1028 to 1069 (DINECKMIPNLCTHGKCRNTIGSFKCRCDSGFALDSEERNCT). 46 cysteine pairs are disulfide-bonded: Cys-1032/Cys-1044, Cys-1039/Cys-1053, Cys-1055/Cys-1068, Cys-1074/Cys-1086, Cys-1081/Cys-1095, Cys-1097/Cys-1111, Cys-1117/Cys-1129, Cys-1124/Cys-1138, Cys-1140/Cys-1153, Cys-1159/Cys-1171, Cys-1166/Cys-1180, Cys-1182/Cys-1195, Cys-1201/Cys-1212, Cys-1208/Cys-1221, Cys-1223/Cys-1236, Cys-1242/Cys-1254, Cys-1249/Cys-1263, Cys-1265/Cys-1278, Cys-1284/Cys-1296, Cys-1291/Cys-1305, Cys-1307/Cys-1320, Cys-1326/Cys-1339, Cys-1333/Cys-1348, Cys-1350/Cys-1361, Cys-1367/Cys-1380, Cys-1374/Cys-1389, Cys-1391/Cys-1402, Cys-1408/Cys-1420, Cys-1415/Cys-1429, Cys-1431/Cys-1444, Cys-1450/Cys-1461, Cys-1456/Cys-1470, Cys-1472/Cys-1485, Cys-1491/Cys-1502, Cys-1497/Cys-1511, Cys-1513/Cys-1526, Cys-1534/Cys-1562, Cys-1549/Cys-1574, Cys-1563/Cys-1577, Cys-1564/Cys-1589, Cys-1610/Cys-1622, Cys-1617/Cys-1631, Cys-1633/Cys-1646, Cys-1652/Cys-1663, Cys-1658/Cys-1672, and Cys-1674/Cys-1687. A glycan (N-linked (GlcNAc...) asparagine) is linked at Asn-1067. The EGF-like 16; calcium-binding domain occupies 1070–1112 (DIDECRISPDLCGRGQCVNTPGDFECKCDEGYESGFMMMKNCM). The region spanning 1113–1154 (DIDECQRDPLLCRGGVCLNTEGSYRCECPPGHQLAPNISACI) is the EGF-like 17; calcium-binding domain. O-linked (Glc) serine glycosylation is present at Ser-1135. N-linked (GlcNAc...) asparagine glycosylation is present at Asn-1149. In terms of domain architecture, EGF-like 18; calcium-binding spans 1155–1196 (DINECELSAHLCPHGRCVNLIGKYQCACNPGYHSTPDRLFCV). The EGF-like 19; calcium-binding domain occupies 1197 to 1237 (DIDECSIMNGGCETFCTNSEGSYECSCQPGFALMPDQRSCT). O-linked (Glc) serine glycosylation occurs at Ser-1218. The region spanning 1238-1279 (DIDECEDNPNICDGGQCTNIPGEYRCLCYDGFMASEDMKTCV) is the EGF-like 20; calcium-binding domain. Positions 1280-1321 (DVNECDLNPNICLSGTCENTKGSFICHCDMGYSGKKGKTGCT) constitute an EGF-like 21; calcium-binding domain. Ser-1302 carries an O-linked (Glc) serine glycan. Residues 1322-1362 (DINECEIGAHNCDRHAVCTNTAGSFKCSCSPGWIGDGIKCT) enclose the EGF-like 22; calcium-binding domain. Ser-1345 carries O-linked (Glc) serine glycosylation. The region spanning 1363–1403 (DLDECSNGTHMCSQHADCKNTMGSYRCLCKEGYTGDGFTCT) is the EGF-like 23; calcium-binding domain. A glycan (N-linked (GlcNAc...) asparagine) is linked at Asn-1369. The O-linked (Glc) serine glycan is linked to Ser-1386. The EGF-like 24; calcium-binding domain maps to 1404-1445 (DLDECSENLNLCGNGQCLNAPGGYRCECDMGFVPSADGKACE). Residues 1446 to 1486 (DIDECSLPNICVFGTCHNLPGLFRCECEIGYELDRSGGNCT) form the EGF-like 25; calcium-binding domain. The N-linked (GlcNAc...) asparagine glycan is linked to Asn-1484. The EGF-like 26; calcium-binding domain maps to 1487–1527 (DVNECLDPTTCISGNCVNTPGSYTCDCPPDFELNPTRVGCV). Ser-1508 is a glycosylation site (O-linked (Glc) serine). Residues 1528–2731 (DTRSGNCYLD…GYPKRGRKRR (1204 aa)) are C-terminal domain. Residues 1532-1589 (GNCYLDIRPRGDNGDTACSNEIGVGVSKASCCCSLGKAWGTPCELCPPVNTSEYKILC) enclose the TB 6 domain. The short motif at 1541-1543 (RGD) is the Cell attachment site element. An N-linked (GlcNAc...) asparagine glycan is attached at Asn-1581. One can recognise an EGF-like 27; calcium-binding domain in the interval 1606–1647 (DIDECQELPGLCQGGKCINTFGSFQCRCPTGYYLNEDTRVCD). Ser-1628 is a glycosylation site (O-linked (Glc) serine). One can recognise an EGF-like 28; calcium-binding domain in the interval 1648-1688 (DVNECETPGICGPGTCYNTVGNYTCICPPDYMQVNGGNNCM). Asn-1669 is a glycosylation site (N-linked (GlcNAc...) asparagine). Residues 1693–1748 (SLCYRNYYADNQTCDGELLFNMTKKMCCCSYNIGRAWNKPCEQCPIPSTDEFATLC) form the TB 7 domain. 2 N-linked (GlcNAc...) asparagine glycosylation sites follow: Asn-1703 and Asn-1713. In terms of domain architecture, EGF-like 29; calcium-binding spans 1766 to 1807 (DIDECREIPGVCENGVCINMVGSFRCECPVGFFYNDKLLVCE). Cystine bridges form between Cys-1770–Cys-1782, Cys-1777–Cys-1791, Cys-1793–Cys-1806, Cys-1812–Cys-1824, Cys-1818–Cys-1833, Cys-1835–Cys-1847, Cys-1853–Cys-1865, Cys-1860–Cys-1874, Cys-1876–Cys-1889, Cys-1895–Cys-1905, Cys-1900–Cys-1914, Cys-1916–Cys-1928, Cys-1934–Cys-1947, Cys-1942–Cys-1956, Cys-1958–Cys-1971, Cys-1977–Cys-1989, Cys-1984–Cys-1998, Cys-2000–Cys-2011, Cys-2017–Cys-2029, Cys-2024–Cys-2038, Cys-2040–Cys-2053, Cys-2061–Cys-2083, Cys-2070–Cys-2096, Cys-2084–Cys-2099, Cys-2085–Cys-2111, Cys-2131–Cys-2142, Cys-2137–Cys-2151, Cys-2153–Cys-2164, Cys-2170–Cys-2181, Cys-2176–Cys-2190, Cys-2192–Cys-2204, Cys-2210–Cys-2221, Cys-2217–Cys-2230, Cys-2232–Cys-2245, Cys-2251–Cys-2265, Cys-2258–Cys-2274, Cys-2276–Cys-2289, Cys-2295–Cys-2307, Cys-2302–Cys-2316, and Cys-2318–Cys-2331. The 41-residue stretch at 1808–1848 (DIDECQNGPVCQRNAECINTAGSYRCDCKPGYRFTSTGQCN) folds into the EGF-like 30; calcium-binding domain. O-linked (Glc) serine glycosylation occurs at Ser-1830. The 42-residue stretch at 1849 to 1890 (DRNECQEIPNICSHGQCIDTVGSFYCLCHTGFKTNADQTMCL) folds into the EGF-like 31; calcium-binding domain. O-linked (Glc) serine glycosylation is present at Ser-1871. The 39-residue stretch at 1891 to 1929 (DINECERDACGNGTCRNTIGSFNCRCNHGFILSHNNDCI) folds into the EGF-like 32; calcium-binding domain. The N-linked (GlcNAc...) asparagine glycan is linked to Asn-1902. Ser-1911 is a glycosylation site (O-linked (Glc) serine). The EGF-like 33; calcium-binding domain maps to 1930–1972 (DVDECATGNGNLCRNGQCINTVGSFQCQCNEGYEVAPDGRTCV). O-linked (Glc) serine glycosylation is present at Ser-1953. The EGF-like 34; calcium-binding domain maps to 1973–2012 (DINECLLDPRKCAPGTCQNLDGSYRCICPPGYSLQNDKCE). The 42-residue stretch at 2013–2054 (DIDECVEEPEICALGTCSNTEGSFKCLCPDGFSLSSTGRRCQ) folds into the EGF-like 35; calcium-binding domain. Residue Ser-2035 is glycosylated (O-linked (Glc) serine). The TB 8 domain occupies 2059 to 2111 (SYCYAKFEGGKCSSPKSRNHSKQECCCALKGEGWGDPCELCPTEPDEAFRQIC). Asn-2077 is a glycosylation site (N-linked (GlcNAc...) asparagine). In terms of domain architecture, EGF-like 36; calcium-binding spans 2127–2165 (DMDECKEPDVCKHGQCINTDGSYRCECPFGYILQGNECV). Ser-2148 carries O-linked (Glc) serine glycosylation. Residues 2166–2205 (DTDECSVGNPCGNGTCKNVIGGFECTCEEGFEPGPMMTCE) form the EGF-like 37; calcium-binding domain. Asn-2178 carries an N-linked (GlcNAc...) asparagine glycan. One can recognise an EGF-like 38; calcium-binding domain in the interval 2206–2246 (DINECAQNPLLCAFRCVNTYGSYECKCPAGYVLREDRRMCK). A glycan (O-linked (Glc) serine) is linked at Ser-2227. The EGF-like 39; calcium-binding domain occupies 2247–2290 (DEDECEEGKHDCAEKQMECKNLIGTYLCICGPGYQRRPDGEGCV). The EGF-like 40; calcium-binding domain occupies 2291-2332 (DENECQTKPGICENGRCLNTRGSYTCECNDGFTASPNQDECL). Ser-2313 is a glycosylation site (O-linked (Glc) serine). One can recognise a TB 9 domain in the interval 2337-2390 (GYCFTEVLQNMCQIGSSNRNPVTKSECCCDGGRGWGPHCEICPFQGTVAFKKLC). The EGF-like 41; calcium-binding domain maps to 2402-2443 (DIDECKVIHDVCRNGECVNDRGSYHCICKTGYTPDITGTACV). Disulfide bonds link Cys-2406–Cys-2418, Cys-2413–Cys-2427, Cys-2429–Cys-2442, Cys-2448–Cys-2459, Cys-2455–Cys-2468, Cys-2470–Cys-2483, Cys-2489–Cys-2500, Cys-2496–Cys-2509, Cys-2511–Cys-2522, Cys-2528–Cys-2541, Cys-2535–Cys-2550, Cys-2552–Cys-2565, Cys-2571–Cys-2581, Cys-2577–Cys-2590, Cys-2592–Cys-2605, Cys-2611–Cys-2622, Cys-2617–Cys-2631, Cys-2633–Cys-2646, Cys-2652–Cys-2663, Cys-2659–Cys-2672, and Cys-2674–Cys-2686. The EGF-like 42; calcium-binding domain occupies 2444 to 2484 (DLNECNQAPKPCNFICKNTEGSYQCSCPKGYILQEDGRSCK). Residue Ser-2465 is glycosylated (O-linked (Glc) serine). The region spanning 2485–2523 (DLDECATKQHNCQFLCVNTIGSFTCKCPPGFTQHHTACI) is the EGF-like 43; calcium-binding domain. Residues 2524–2566 (DNNECTSDINLCGSKGICQNTPGSFTCECQRGFSLDPSGASCE) enclose the EGF-like 44; calcium-binding domain. O-linked (Glc) serine glycosylation is present at Ser-2547. An EGF-like 45; calcium-binding domain is found at 2567–2606 (DVDECEGNHRCQHGCQNIIGGYRCSCPQGYLQHYQWNQCV). In terms of domain architecture, EGF-like 46; calcium-binding spans 2607–2647 (DENECLSAHICGGASCHNTLGSYKCMCPAGFQYEQFSGGCQ). O-linked (Glc) serine glycosylation occurs at Ser-2628. One can recognise an EGF-like 47; calcium-binding domain in the interval 2648 to 2687 (DINECGSAQAPCSYGCSNTEGGYLCACPPGYFRIGQGHCV). Phosphoserine is present on residues Ser-2702 and Ser-2709. Residues Asn-2734, Asn-2750, and Asn-2767 are each glycosylated (N-linked (GlcNAc...) asparagine).

This sequence belongs to the fibrillin family. In terms of assembly, interacts with COL16A1. Interacts with integrin alpha-V/beta-3. Interacts with ADAMTS10; this interaction promotes microfibril assembly. Interacts with THSD4; this interaction promotes fibril formation. Interacts (via N-terminal domain) with FBLN2 and FBLN5. Interacts with ELN. Forms a ternary complex with ELN and FBLN2 or FBLN5 and a significant interaction with ELN seen only in the presence of FBLN2 or FBLN5. Interacts (via N-terminal domain) with LTBP2 (via C-terminal domain) in a Ca(+2)-dependent manner. Interacts (via N-terminal domain) with LTBP1 (via C-terminal domain). Interacts with integrins ITGA5:ITGB1, ITGAV:ITGB3 and ITGAV:ITGB6. Interacts (via N-terminal domain) with BMP2, BMP4, BMP7, BMP10 and GDF5. Interacts (via N-terminal domain) with MFAP2 and MFAP5. Interacts with ADAMTSL5. Interacts with MFAP4. Interacts (via N-terminal domain) with TNFSF11 in a Ca(+2)-dependent manner. Interacts (via N-terminal domain) with EFEMP2; this interaction inhibits EFEMP2 binding to LOX and ELN. Post-translationally, cleavage of N- and C-terminus by furin is required for incorporation into the extracellular matrix and assembly into microfibrils. The C-terminus, which corresponds to the Asprosin chain, was initially thought to constitute a propeptide. Fibrillin-1 and Asprosin chains are still linked together during the secretion from cells, but are subsequently separated by furin, an essential step for incorporation of Fibrillin-1 into the nascent microfibrils. Forms intermolecular disulfide bonds either with other fibrillin-1 molecules or with other components of the microfibrils. In terms of processing, O-glycosylated on serine residues by POGLUT2 and POGLUT3 which is necessary for efficient protein secretion.

It is found in the secreted. The protein resides in the extracellular space. Its subcellular location is the extracellular matrix. Its function is as follows. Structural component of the 10-12 nm diameter microfibrils of the extracellular matrix, which conveys both structural and regulatory properties to load-bearing connective tissues. Fibrillin-1-containing microfibrils provide long-term force bearing structural support. In tissues such as the lung, blood vessels and skin, microfibrils form the periphery of the elastic fiber, acting as a scaffold for the deposition of elastin. In addition, microfibrils can occur as elastin-independent networks in tissues such as the ciliary zonule, tendon, cornea and glomerulus where they provide tensile strength and have anchoring roles. Fibrillin-1 also plays a key role in tissue homeostasis through specific interactions with growth factors, such as the bone morphogenetic proteins (BMPs), growth and differentiation factors (GDFs) and latent transforming growth factor-beta-binding proteins (LTBPs), cell-surface integrins and other extracellular matrix protein and proteoglycan components. Regulates osteoblast maturation by controlling TGF-beta bioavailability and calibrating TGF-beta and BMP levels, respectively. Negatively regulates osteoclastogenesis by binding and sequestering an osteoclast differentiation and activation factor TNFSF11. This leads to disruption of TNFSF11-induced Ca(2+) signaling and impairment of TNFSF11-mediated nuclear translocation and activation of transcription factor NFATC1 which regulates genes important for osteoclast differentiation and function. Mediates cell adhesion via its binding to cell surface receptors integrins ITGAV:ITGB3 and ITGA5:ITGB1. Binds heparin and this interaction plays an important role in the assembly of microfibrils. In terms of biological role, hormone that targets the liver to increase plasma glucose levels. Secreted by white adipose tissue and circulates in the plasma. Acts in response to fasting and promotes blood glucose elevation by binding to the surface of hepatocytes. Promotes hepatocyte glucose release by activating the protein kinase A activity in the liver, resulting in rapid glucose release into the circulation. The polypeptide is Fibrillin-1 (Bos taurus (Bovine)).